The following is a 576-amino-acid chain: Chaperonin CPN60-2, mitochondrial (576 aa).

The transit peptide at 1–34 directs the protein to the mitochondrion; the sequence is MYRAAASLASKARQAGSSSAARQVGSRLAWSRNY.

The protein belongs to the chaperonin (HSP60) family.

It localises to the mitochondrion. Implicated in mitochondrial protein import and macromolecular assembly. May facilitate the correct folding of imported proteins. May also prevent misfolding and promote the refolding and proper assembly of unfolded polypeptides generated under stress conditions in the mitochondrial matrix. The sequence is that of Chaperonin CPN60-2, mitochondrial (CPN60II) from Zea mays (Maize).